The sequence spans 122 residues: uncharacterized protein (122 aa).

Basic and acidic residues predominate over residues 1–15 (MAEPGGRGDYRKDGR). The interval 1 to 49 (MAEPGGRGDYRKDGRLPSLSRSPLSTTLGTSPACGLEIPPTSGARPDGS) is disordered. Over residues 16-32 (LPSLSRSPLSTTLGTSP) the composition is skewed to low complexity.

This is an uncharacterized protein from Homo sapiens (Human).